Consider the following 250-residue polypeptide: Leucyl/phenylalanyl-tRNA--protein transferase (250 aa).

It belongs to the L/F-transferase family.

It localises to the cytoplasm. The enzyme catalyses N-terminal L-lysyl-[protein] + L-leucyl-tRNA(Leu) = N-terminal L-leucyl-L-lysyl-[protein] + tRNA(Leu) + H(+). It carries out the reaction N-terminal L-arginyl-[protein] + L-leucyl-tRNA(Leu) = N-terminal L-leucyl-L-arginyl-[protein] + tRNA(Leu) + H(+). The catalysed reaction is L-phenylalanyl-tRNA(Phe) + an N-terminal L-alpha-aminoacyl-[protein] = an N-terminal L-phenylalanyl-L-alpha-aminoacyl-[protein] + tRNA(Phe). In terms of biological role, functions in the N-end rule pathway of protein degradation where it conjugates Leu, Phe and, less efficiently, Met from aminoacyl-tRNAs to the N-termini of proteins containing an N-terminal arginine or lysine. In Bordetella avium (strain 197N), this protein is Leucyl/phenylalanyl-tRNA--protein transferase.